Reading from the N-terminus, the 1293-residue chain is Late blight resistance protein R1-A (1293 aa).

Coiled coils occupy residues R423 to Q446 and P538 to N560. Residues R539–G826 form the NB-ARC domain. Position 572–579 (G572–T579) interacts with ATP. 9 LRR repeats span residues A876–H899, F956–K981, M1027–N1049, L1056–N1079, P1102–P1125, L1149–N1172, F1175–A1197, F1198–I1222, and E1235–L1259.

Belongs to the disease resistance NB-LRR family.

The protein resides in the cytoplasm. It localises to the membrane. In terms of biological role, confers resistance to late blight (Phytophthora infestans) races carrying the avirulence gene Avr1. Resistance proteins guard the plant against pathogens that contain an appropriate avirulence protein via an indirect interaction with this avirulence protein. That triggers a defense system including the hypersensitive response, which restricts the pathogen growth. The protein is Late blight resistance protein R1-A (R1A) of Solanum demissum (Wild potato).